A 902-amino-acid chain; its full sequence is Auxin response factor 5 (902 aa).

The TF-B3 DNA-binding region spans 158 to 260 (FCKTLTASDT…QLMVGVRRAN (103 aa)). Residues 497 to 543 (SEMVQPQNKLTVNPSASNTSGQEQNLSQSMSAPAKPENSTLSGCSSG) are disordered. One can recognise a PB1 domain in the interval 793–877 (RTYTKVQKTG…RCIRILSPTE (85 aa)).

Belongs to the ARF family. As to quaternary structure, homodimers and heterodimers. Interacts with BRX and the auxin-responsive proteins IAA1, IAA12 (BODENLOS), IAA17 and ARF7. Expressed in the whole plant with a lower expression in leaves. Detected in embryo axis, provascular tissues, procambium and some differentiated vascular regions of mature organs.

Its subcellular location is the nucleus. In terms of biological role, auxin response factors (ARFs) are transcriptional factors that bind specifically to the DNA sequence 5'-TGTCTC-3' found in the auxin-responsive promoter elements (AuxREs). Seems to act as transcriptional activator. Formation of heterodimers with Aux/IAA proteins may alter their ability to modulate early auxin response genes expression. Mediates embryo axis formation and vascular tissues differentiation. Functionally redundant with ARF7. May be necessary to counteract AMP1 activity. The protein is Auxin response factor 5 (ARF5) of Arabidopsis thaliana (Mouse-ear cress).